Reading from the N-terminus, the 120-residue chain is MSYRKLGRTSAQRKALLRDLATDLIINERIETTEARAKELRSVVEKMITLGKRGDLHARRQAAAFIRKEVANSETGQDALQKLFSDIAPRYQDRQGGYTRIMKLGPRRGDGAPMVIIELV.

It belongs to the bacterial ribosomal protein bL17 family. Part of the 50S ribosomal subunit. Contacts protein L32.

This is Large ribosomal subunit protein bL17 from Geobacillus sp. (strain WCH70).